A 344-amino-acid chain; its full sequence is L-rhamnose-proton symporter (344 aa).

The next 10 helical transmembrane spans lie at 4-24 (AITM…CFYA), 38-58 (WSVG…ALLL), 68-88 (FSLS…IGNI), 101-121 (MGIG…TPII), 137-157 (TLLG…AGQL), 175-195 (LVLA…MNAA), 214-234 (LPSY…FCFI), 259-279 (VLLS…YAWG), 290-310 (ISWM…GLVL), and 323-343 (VLSL…IGMA).

This sequence belongs to the L-rhamnose transporter (TC 2.A.7.6) family.

The protein localises to the cell inner membrane. The catalysed reaction is L-rhamnopyranose(in) + H(+)(in) = L-rhamnopyranose(out) + H(+)(out). Uptake of L-rhamnose across the cytoplasmic membrane with the concomitant transport of protons into the cell (symport system). The polypeptide is L-rhamnose-proton symporter (Escherichia coli O9:H4 (strain HS)).